The chain runs to 130 residues: Small ribosomal subunit protein uS9 (130 aa).

The segment at 98–130 is disordered; sequence LKRAGMLTRDPRMKERKKPGLKGARRSPQFSKR. Basic residues predominate over residues 111 to 130; it reads KERKKPGLKGARRSPQFSKR.

It belongs to the universal ribosomal protein uS9 family.

The chain is Small ribosomal subunit protein uS9 from Macrococcus caseolyticus (strain JCSC5402) (Macrococcoides caseolyticum).